Reading from the N-terminus, the 408-residue chain is Peptidase T (408 aa).

Histidine 78 contacts Zn(2+). Aspartate 80 is a catalytic residue. Aspartate 140 provides a ligand contact to Zn(2+). Residue glutamate 174 is the Proton acceptor of the active site. Residues glutamate 175, aspartate 197, and histidine 379 each coordinate Zn(2+).

The protein belongs to the peptidase M20B family. Zn(2+) is required as a cofactor.

It is found in the cytoplasm. The catalysed reaction is Release of the N-terminal residue from a tripeptide.. Cleaves the N-terminal amino acid of tripeptides. This is Peptidase T from Staphylococcus aureus (strain bovine RF122 / ET3-1).